A 109-amino-acid polypeptide reads, in one-letter code: Tetraspanin-31 (109 aa).

The Cytoplasmic segment spans residues Met1–Ala12. The helical transmembrane segment at Leu13–Trp33 threads the bilayer. The Extracellular segment spans residues Ala34 to His44. Residues Ile45 to Val65 traverse the membrane as a helical segment. Residues Gly66–Gln72 are Cytoplasmic-facing. A helical membrane pass occupies residues Val73–Ser93. Residues Cys94–Asn109 are Extracellular-facing. A glycan (N-linked (GlcNAc...) asparagine) is linked at Asn100.

Belongs to the tetraspanin (TM4SF) family.

Its subcellular location is the membrane. The protein is Tetraspanin-31 (TSPAN31) of Sus scrofa (Pig).